Reading from the N-terminus, the 91-residue chain is UPF0358 protein SAS1047 (91 aa).

It belongs to the UPF0358 family.

In Staphylococcus aureus (strain MSSA476), this protein is UPF0358 protein SAS1047.